Reading from the N-terminus, the 186-residue chain is Large ribosomal subunit protein uL22 (186 aa).

Residues 160–186 form a disordered region; it reads AAENEPAKKKLSKKKLQRQKEKMMRNE. The segment covering 177–186 has biased composition (basic and acidic residues); it reads RQKEKMMRNE.

The protein belongs to the universal ribosomal protein uL22 family.

This is Large ribosomal subunit protein uL22 (RpL17) from Aedes aegypti (Yellowfever mosquito).